A 344-amino-acid chain; its full sequence is Anthranilate phosphoribosyltransferase (344 aa).

5-phospho-alpha-D-ribose 1-diphosphate-binding positions include G80, 83–84 (GD), T88, 90–93 (NVST), 108–116 (KHGNRSVSS), and S120. G80 provides a ligand contact to anthranilate. S92 contributes to the Mg(2+) binding site. An anthranilate-binding site is contributed by N111. R166 serves as a coordination point for anthranilate. 2 residues coordinate Mg(2+): D225 and E226.

The protein belongs to the anthranilate phosphoribosyltransferase family. As to quaternary structure, homodimer. Mg(2+) is required as a cofactor.

The enzyme catalyses N-(5-phospho-beta-D-ribosyl)anthranilate + diphosphate = 5-phospho-alpha-D-ribose 1-diphosphate + anthranilate. The protein operates within amino-acid biosynthesis; L-tryptophan biosynthesis; L-tryptophan from chorismate: step 2/5. Its function is as follows. Catalyzes the transfer of the phosphoribosyl group of 5-phosphorylribose-1-pyrophosphate (PRPP) to anthranilate to yield N-(5'-phosphoribosyl)-anthranilate (PRA). This is Anthranilate phosphoribosyltransferase from Legionella pneumophila (strain Lens).